A 162-amino-acid polypeptide reads, in one-letter code: Phosphopantetheine adenylyltransferase (162 aa).

Residue Ser-11 coordinates substrate. ATP contacts are provided by residues 11 to 12 (SF) and His-19. 3 residues coordinate substrate: Lys-43, Val-76, and Arg-90. ATP-binding positions include 91–93 (GLR), Glu-101, and 126–132 (HLYISSS).

This sequence belongs to the bacterial CoaD family. As to quaternary structure, homohexamer. It depends on Mg(2+) as a cofactor.

Its subcellular location is the cytoplasm. The enzyme catalyses (R)-4'-phosphopantetheine + ATP + H(+) = 3'-dephospho-CoA + diphosphate. It functions in the pathway cofactor biosynthesis; coenzyme A biosynthesis; CoA from (R)-pantothenate: step 4/5. In terms of biological role, reversibly transfers an adenylyl group from ATP to 4'-phosphopantetheine, yielding dephospho-CoA (dPCoA) and pyrophosphate. This chain is Phosphopantetheine adenylyltransferase, found in Streptococcus pneumoniae (strain ATCC 700669 / Spain 23F-1).